Consider the following 253-residue polypeptide: uncharacterized protein (253 aa).

A signal peptide spans 1 to 15 (MNRVILFHFHFFKNA).

This is an uncharacterized protein from Archaeoglobus fulgidus (strain ATCC 49558 / DSM 4304 / JCM 9628 / NBRC 100126 / VC-16).